A 177-amino-acid chain; its full sequence is Large ribosomal subunit protein uL10 (177 aa).

It belongs to the universal ribosomal protein uL10 family. Part of the ribosomal stalk of the 50S ribosomal subunit. The N-terminus interacts with L11 and the large rRNA to form the base of the stalk. The C-terminus forms an elongated spine to which L12 dimers bind in a sequential fashion forming a multimeric L10(L12)X complex.

Its function is as follows. Forms part of the ribosomal stalk, playing a central role in the interaction of the ribosome with GTP-bound translation factors. The polypeptide is Large ribosomal subunit protein uL10 (Mycobacterium leprae (strain Br4923)).